Reading from the N-terminus, the 543-residue chain is Acrosin-binding protein (543 aa).

The first 25 residues, 1 to 25 (MGQPAAGSILTLLRVLLLPLGPALA), serve as a signal peptide directing secretion. Positions 26 to 106 (QDSPSAPTPG…ASWFESFCQF (81 aa)) are pro-ACR binding. A propeptide spans 26-276 (QDSPSAPTPG…DPHSFTARVR (251 aa)) (removed in mature form). A disordered region spans residues 187 to 239 (AGQEQAAGHKQEQGQEQHKQDPTQEHKQDDGQEQEEQEEEQEEEGKQEEGQSV). The span at 193-216 (AGHKQEQGQEQHKQDPTQEHKQDD) shows a compositional bias: basic and acidic residues. The segment covering 217–232 (GQEQEEQEEEQEEEGK) has biased composition (acidic residues). Residues 319 to 427 (LPHKEALLVL…TQAGTSESGR (109 aa)) form a pro-ACR binding region.

As to quaternary structure, binds proacrosin (ACR). Does not bind the mature form of ACR. In terms of processing, the N-terminus is blocked. Phosphorylated on Tyr residues in capacitated sperm. Post-translationally, synthesized as a 60-kDa precursor, the 32-kDa mature form is post-translationally produced by the removal of the N-terminal half of the precursor during sperm maturation in the testis and/or epididymis. As to expression, specifically expressed in testis.

The protein resides in the secreted. Its subcellular location is the cytoplasmic vesicle. It localises to the secretory vesicle. It is found in the acrosome. In terms of biological role, acrosomal protein that maintains proacrosin (pro-ACR) as an enzymatically inactive zymogen in the acrosome. Involved also in the acrosome formation. This is Acrosin-binding protein (ACRBP) from Cavia porcellus (Guinea pig).